The sequence spans 953 residues: Pyruvate, phosphate dikinase, chloroplastic (953 aa).

The transit peptide at 1–77 (MMSSLSVEGM…VLNPVSPPVT (77 aa)) directs the protein to the chloroplast. The interval 55–74 (PELRSSGLTPPRAVLNPVSP) is disordered. Thr-533 carries the phosphothreonine; by PDRP1 modification. The Tele-phosphohistidine intermediate role is filled by His-535. Arg-641, Arg-698, Glu-827, Gly-848, Thr-849, Asn-850, and Asp-851 together coordinate substrate. Glu-827 lines the Mg(2+) pocket. Asp-851 is a binding site for Mg(2+). The active-site Proton donor is the Cys-913.

This sequence belongs to the PEP-utilizing enzyme family. As to quaternary structure, homotetramer. Requires Mg(2+) as cofactor. In terms of processing, phosphorylation of Thr-533 in the dark inactivates the enzyme. Dephosphorylation upon light stimulation reactivates the enzyme.

The protein localises to the plastid. It is found in the chloroplast. It catalyses the reaction pyruvate + phosphate + ATP = phosphoenolpyruvate + AMP + diphosphate + H(+). The protein operates within photosynthesis; C4 acid pathway. Activated by light-induced dephosphorylation. Inhibited by dark-induced phosphorylation. Both reactions are catalyzed by PDRP1. Inactivated by cold due to the dissociation of the homotetramer. In terms of biological role, formation of phosphoenolpyruvate, which is the primary acceptor of CO(2) in C4 and some Crassulacean acid metabolism plants. The polypeptide is Pyruvate, phosphate dikinase, chloroplastic (Flaveria bidentis (Coastal plain yellowtops)).